A 183-amino-acid polypeptide reads, in one-letter code: uncharacterized protein (183 aa).

A disordered region spans residues 1–23 (MGSSFVIDRSSSSPAPPRGPAPK).

This is an uncharacterized protein from Saccharomyces cerevisiae (strain ATCC 204508 / S288c) (Baker's yeast).